A 155-amino-acid polypeptide reads, in one-letter code: Endoribonuclease YbeY (155 aa).

His116, His120, and His126 together coordinate Zn(2+).

The protein belongs to the endoribonuclease YbeY family. Zn(2+) is required as a cofactor.

It localises to the cytoplasm. In terms of biological role, single strand-specific metallo-endoribonuclease involved in late-stage 70S ribosome quality control and in maturation of the 3' terminus of the 16S rRNA. This is Endoribonuclease YbeY from Thermobifida fusca (strain YX).